The following is a 527-amino-acid chain: Protein TIC 56, chloroplastic (527 aa).

The transit peptide at 1 to 48 (MSSMNFNPFQNWFEKPPNPVPSINFVSLADSFFPKSQSPNFASIGLPK) directs the protein to the chloroplast. The segment at 43–67 (SIGLPKFSKKSPKPETAGTDEPGPY) is disordered. The residue at position 350 (Asn-350) is a Deamidated asparagine. Residues 491–508 (RREEELREEDLKHYSGRT) are compositionally biased toward basic and acidic residues. The segment at 491–527 (RREEELREEDLKHYSGRTDEDEEEEEEEDDDSNSKKD) is disordered. A compositionally biased stretch (acidic residues) spans 509–521 (DEDEEEEEEEDDD).

In terms of assembly, part of the Tic complex. Component of the 1-MD complex, composed of TIC20-I, TIC214, TIC100 and TIC56. Interacts with the translocating preproteins. Hydrolysis of ATP is essential for the formation of this complex. The 1-MD complex interacts with TIC21.

It is found in the plastid. Its subcellular location is the chloroplast inner membrane. Its function is as follows. Involved in protein precursor import into chloroplasts. May be part of an intermediate translocation complex acting as a protein-conducting channel at the inner envelope. The polypeptide is Protein TIC 56, chloroplastic (Arabidopsis thaliana (Mouse-ear cress)).